A 361-amino-acid chain; its full sequence is DNA replication and repair protein RecF (361 aa).

Position 30-37 (30-37) interacts with ATP; it reads GPNGSGKT.

It belongs to the RecF family.

It is found in the cytoplasm. The RecF protein is involved in DNA metabolism; it is required for DNA replication and normal SOS inducibility. RecF binds preferentially to single-stranded, linear DNA. It also seems to bind ATP. This Yersinia pseudotuberculosis serotype O:1b (strain IP 31758) protein is DNA replication and repair protein RecF.